The following is a 207-amino-acid chain: Large ribosomal subunit protein uL4 (207 aa).

The segment covering 45–57 has biased composition (polar residues); it reads RQGTHSVKNRSTV. Residues 45–77 are disordered; sequence RQGTHSVKNRSTVSGGGRKPWRQKGTGNARQGS.

It belongs to the universal ribosomal protein uL4 family. In terms of assembly, part of the 50S ribosomal subunit.

One of the primary rRNA binding proteins, this protein initially binds near the 5'-end of the 23S rRNA. It is important during the early stages of 50S assembly. It makes multiple contacts with different domains of the 23S rRNA in the assembled 50S subunit and ribosome. Functionally, forms part of the polypeptide exit tunnel. The polypeptide is Large ribosomal subunit protein uL4 (Oenococcus oeni (strain ATCC BAA-331 / PSU-1)).